The sequence spans 385 residues: Probable tRNA sulfurtransferase (385 aa).

Residues 65-165 enclose the THUMP domain; the sequence is AILQELFSFL…KEHFLVFTER (101 aa). ATP-binding positions include 183–184, 208–209, Arg267, Gly285, and Gln294; these read LL and TF.

Belongs to the ThiI family.

The protein localises to the cytoplasm. It catalyses the reaction [ThiI sulfur-carrier protein]-S-sulfanyl-L-cysteine + a uridine in tRNA + 2 reduced [2Fe-2S]-[ferredoxin] + ATP + H(+) = [ThiI sulfur-carrier protein]-L-cysteine + a 4-thiouridine in tRNA + 2 oxidized [2Fe-2S]-[ferredoxin] + AMP + diphosphate. The enzyme catalyses [ThiS sulfur-carrier protein]-C-terminal Gly-Gly-AMP + S-sulfanyl-L-cysteinyl-[cysteine desulfurase] + AH2 = [ThiS sulfur-carrier protein]-C-terminal-Gly-aminoethanethioate + L-cysteinyl-[cysteine desulfurase] + A + AMP + 2 H(+). The protein operates within cofactor biosynthesis; thiamine diphosphate biosynthesis. Its function is as follows. Catalyzes the ATP-dependent transfer of a sulfur to tRNA to produce 4-thiouridine in position 8 of tRNAs, which functions as a near-UV photosensor. Also catalyzes the transfer of sulfur to the sulfur carrier protein ThiS, forming ThiS-thiocarboxylate. This is a step in the synthesis of thiazole, in the thiamine biosynthesis pathway. The sulfur is donated as persulfide by IscS. In Mycoplasma genitalium (strain ATCC 33530 / DSM 19775 / NCTC 10195 / G37) (Mycoplasmoides genitalium), this protein is Probable tRNA sulfurtransferase.